The primary structure comprises 517 residues: Histone H4 transcription factor (517 aa).

C2H2-type zinc fingers lie at residues 15–39, 129–153, and 169–193; these read LQCE…VTQH, FLCL…VEAH, and VLCG…LRSH. The C2H2-type 4; degenerate zinc finger occupies 199–221; that stretch reads VACPTCGGMFANNTKFLDHIRRQ. 5 consecutive C2H2-type zinc fingers follow at residues 229-251, 255-278, 284-306, 312-337, and 345-368; these read FQCS…MRNH, YKCP…RFRH, FKCD…LDTH, YRCD…RKVH, and YKCH…RKKH. Residues 373-517 are interaction with NPAT; sequence PSGHPRFRYK…IAEEPEIQMV (145 aa). The tract at residues 374 to 407 is required for activation of histone H4 transcription and contributes to DNA-binding; the sequence is SGHPRFRYKEHEDGYMRLQLVRYESVELTQQLLR. The interval 431-460 is disordered; that stretch reads TVPGEPGRKEEEEEGKGSEGTALSASQDNP. Residues 451 to 460 show a composition bias toward polar residues; that stretch reads TALSASQDNP.

In terms of assembly, binds MBD2 and a histone deacetylase complex. Interacts with NPAT. Ubiquitinated. Ubiquitination may lead to proteasome-mediated degradation. In terms of tissue distribution, ubiquitous. Highly expressed in brain, heart, skeletal muscle, spleen, kidney, small intestine, placenta and liver.

The protein resides in the nucleus. Functionally, transcriptional repressor that binds to the consensus sequence 5'-CGGACGTT-3' and to the RB1 promoter. Transcriptional activator that promotes histone H4 gene transcription at the G1/S phase transition in conjunction with NPAT. Also activates transcription of the ATM and PRKDC genes. Autoregulates its expression by associating with its own promoter. In Homo sapiens (Human), this protein is Histone H4 transcription factor (HINFP).